We begin with the raw amino-acid sequence, 131 residues long: Bacteriohemerythrin (131 aa).

His-22, His-58, Glu-62, His-77, His-81, His-117, and Asp-122 together coordinate Fe cation.

This sequence belongs to the hemerythrin family. In terms of assembly, monomer.

Oxygen-binding protein. May be involved in a storage mechanism or for delivery to oxygen-requiring enzymes. The oxygen-binding site contains two iron atoms. The polypeptide is Bacteriohemerythrin (Methylococcus capsulatus (strain ATCC 33009 / NCIMB 11132 / Bath)).